Here is a 1060-residue protein sequence, read N- to C-terminus: Protein transport protein Sec16B (1060 aa).

Residues 1–86 form a disordered region; sequence MELWAPQRLP…GDWHQPVSGV (86 aa). A required for endoplasmic reticulum localization region spans residues 34–224; sequence RPVPHSWHNG…PSLASESNLL (191 aa). Over residues 41–50 the composition is skewed to basic and acidic residues; the sequence is HNGERFHQWQ. Over residues 51–60 the composition is skewed to polar residues; that stretch reads DNRGSPQPQQ. Phosphoserine is present on residues S55, S143, S167, S188, and S191. Disordered regions lie at residues 163 to 236, 245 to 264, 711 to 733, 770 to 796, and 834 to 1060; these read ENQH…SSSY, APERDDPPASAAWSPVQADV, KVAGDIGDPHPTRSDISGAGGTT, PSPQQPFPLQPGSYPAGGGAGQTGTPR, and PGEN…TQPC. Composition is skewed to polar residues over residues 165 to 195 and 213 to 222; these read QHSPFGTNSETHFQSNSRNPCKDSPASNSGQ and NKPSLASESN. Residues 223–236 show a composition bias toward low complexity; the sequence is LLQQRESGLSSSSY. Phosphoserine occurs at positions 254 and 258. The segment at 271–713 is central conserved domain (CCD); required for localization to endoplasmic reticulum exit sites; sequence APMKFYIPHV…LRRQLEQKVA (443 aa). The segment covering 837 to 847 has biased composition (polar residues); it reads NTVSQETSQPP. T858 is subject to Phosphothreonine. A phosphoserine mark is found at S868, S871, S874, S882, and S883. 2 stretches are compositionally biased toward basic and acidic residues: residues 875–890 and 899–908; these read AKEDEKESSDEADKNS and KLGDGKEHTK. The segment covering 909–918 has biased composition (low complexity); that stretch reads SSGFGWFSWF. Residues 930–941 are compositionally biased toward acidic residues; the sequence is GDEDSSDSPDSE. Residues 991–1001 show a composition bias toward gly residues; that stretch reads AAAGAGVGGLS. The segment covering 1031–1046 has biased composition (polar residues); it reads NPSQVPQLPTATSLNR.

The protein belongs to the SEC16 family. In terms of assembly, SEC16A and SEC16B are each present in multiple copies in a heteromeric complex. Interacts with TFG. Interacts with SEC13. In terms of tissue distribution, ubiquitous.

The protein resides in the endoplasmic reticulum membrane. Its subcellular location is the golgi apparatus membrane. Functionally, plays a role in the organization of the endoplasmic reticulum exit sites (ERES), also known as transitional endoplasmic reticulum (tER). Required for secretory cargo traffic from the endoplasmic reticulum to the Golgi apparatus. Involved in peroxisome biogenesis. Regulates the transport of peroxisomal biogenesis factors PEX3 and PEX16 from the ER to peroxisomes. This Homo sapiens (Human) protein is Protein transport protein Sec16B (SEC16B).